A 435-amino-acid polypeptide reads, in one-letter code: Protein GOLM2 (435 aa).

N-acetylmethionine is present on Met-1. Over 1–14 (MVGFGANRRAGRLP) the chain is Cytoplasmic. Residues 15-35 (SFVLVVLLVVIVVLAFNYWSI) traverse the membrane as a helical; Signal-anchor for type II membrane protein segment. Residues 35-194 (ISSRHVLLQE…DQFLQEQKET (160 aa)) are a coiled coil. The Lumenal segment spans residues 36–435 (SSRHVLLQEE…YGKQRFSDVL (400 aa)). 2 stretches are compositionally biased toward basic and acidic residues: residues 191–212 (QKET…DHGA) and 223–239 (DANK…PHGK). Disordered stretches follow at residues 191–239 (QKET…PHGK) and 271–435 (PPVL…SDVL). Ser-232 is subject to Phosphoserine. Composition is skewed to polar residues over residues 282–294 (QTIS…QPLS) and 302–320 (HLNQ…SNPL). Basic and acidic residues predominate over residues 343–361 (ATRDRANDFHKLKQSRFFD). Ser-365 carries the post-translational modification Phosphoserine. Residues 398–417 (YNEEEDGDGGEEDVQDDEER) show a composition bias toward acidic residues. A compositionally biased stretch (basic and acidic residues) spans 425 to 435 (DYGKQRFSDVL).

Belongs to the GOLM family.

The protein localises to the membrane. The sequence is that of Protein GOLM2 from Mus musculus (Mouse).